We begin with the raw amino-acid sequence, 614 residues long: UvrABC system protein C (614 aa).

The GIY-YIG domain maps to 16-94 (SRPGVYRMFG…VKSLKPRFNV (79 aa)). Residues 204-239 (GELQKRLASEMEAASEAMEFETAARLRDRIRAIAHV) form the UVR domain.

It belongs to the UvrC family. In terms of assembly, interacts with UvrB in an incision complex.

The protein resides in the cytoplasm. In terms of biological role, the UvrABC repair system catalyzes the recognition and processing of DNA lesions. UvrC both incises the 5' and 3' sides of the lesion. The N-terminal half is responsible for the 3' incision and the C-terminal half is responsible for the 5' incision. The chain is UvrABC system protein C from Hyphomonas neptunium (strain ATCC 15444).